A 458-amino-acid polypeptide reads, in one-letter code: UDP-N-acetylglucosamine 1-carboxyvinyltransferase (458 aa).

22-23 is a phosphoenolpyruvate binding site; the sequence is KN. Arginine 94 is a UDP-N-acetyl-alpha-D-glucosamine binding site. The Proton donor role is filled by aspartate 119. The UDP-N-acetyl-alpha-D-glucosamine site is built by aspartate 309 and valine 331.

Belongs to the EPSP synthase family. MurA subfamily.

The protein localises to the cytoplasm. It catalyses the reaction phosphoenolpyruvate + UDP-N-acetyl-alpha-D-glucosamine = UDP-N-acetyl-3-O-(1-carboxyvinyl)-alpha-D-glucosamine + phosphate. It participates in cell wall biogenesis; peptidoglycan biosynthesis. Cell wall formation. Adds enolpyruvyl to UDP-N-acetylglucosamine. The protein is UDP-N-acetylglucosamine 1-carboxyvinyltransferase of Chlamydia pneumoniae (Chlamydophila pneumoniae).